The sequence spans 87 residues: Protein anon-73B1 (87 aa).

Residues 25-47 (LLIRYGLYVGALFQFVCISAAVL) traverse the membrane as a helical segment. A disordered region spans residues 50–87 (NNPDSQSNPETGEVTEREGEPVRTRLHKIRKLEKKKRR). Residues 63-72 (VTEREGEPVR) are compositionally biased toward basic and acidic residues. The span at 73-87 (TRLHKIRKLEKKKRR) shows a compositional bias: basic residues.

The protein belongs to the UPF0239 family.

It localises to the membrane. In Drosophila simulans (Fruit fly), this protein is Protein anon-73B1 (anon-73B1).